The primary structure comprises 503 residues: Maturase K (503 aa).

The protein belongs to the intron maturase 2 family. MatK subfamily.

Its subcellular location is the plastid. The protein localises to the chloroplast. Its function is as follows. Usually encoded in the trnK tRNA gene intron. Probably assists in splicing its own and other chloroplast group II introns. The polypeptide is Maturase K (Rosa carolina (Pasture rose)).